Consider the following 492-residue polypeptide: N-succinylglutamate 5-semialdehyde dehydrogenase (492 aa).

220–225 (GSASTG) is an NAD(+) binding site. Active-site residues include Glu-243 and Cys-277.

The protein belongs to the aldehyde dehydrogenase family. AstD subfamily.

It carries out the reaction N-succinyl-L-glutamate 5-semialdehyde + NAD(+) + H2O = N-succinyl-L-glutamate + NADH + 2 H(+). Its pathway is amino-acid degradation; L-arginine degradation via AST pathway; L-glutamate and succinate from L-arginine: step 4/5. In terms of biological role, catalyzes the NAD-dependent reduction of succinylglutamate semialdehyde into succinylglutamate. The chain is N-succinylglutamate 5-semialdehyde dehydrogenase from Salmonella agona (strain SL483).